Consider the following 600-residue polypeptide: DNA ligase (600 aa).

Position 258 (Asp-258) interacts with ATP. The N6-AMP-lysine intermediate role is filled by Lys-260. ATP is bound by residues Arg-265, Arg-280, Glu-310, Phe-350, Arg-427, and Lys-433.

The protein belongs to the ATP-dependent DNA ligase family. Mg(2+) is required as a cofactor.

It carries out the reaction ATP + (deoxyribonucleotide)n-3'-hydroxyl + 5'-phospho-(deoxyribonucleotide)m = (deoxyribonucleotide)n+m + AMP + diphosphate.. Inhibited by PCNA123 and PCNA323. Functionally, DNA ligase that seals nicks in double-stranded DNA during DNA replication, DNA recombination and DNA repair. The protein is DNA ligase of Sulfurisphaera tokodaii (strain DSM 16993 / JCM 10545 / NBRC 100140 / 7) (Sulfolobus tokodaii).